Reading from the N-terminus, the 1295-residue chain is Phosphoribosylformylglycinamidine synthase (1295 aa).

The interval 305 to 327 is disordered; sequence WPGAATGSGGEIRDEGATGRGAK. ATP-binding positions include 307-318 and alanine 678; that span reads GAATGSGGEIRD. Glutamate 718, asparagine 722, and aspartate 884 together coordinate Mg(2+). Serine 886 lines the ATP pocket. The Glutamine amidotransferase type-1 domain maps to 1042-1295; that stretch reads VAVLREQGVN…IFRNARKQLG (254 aa). Residue cysteine 1135 is the Nucleophile of the active site. Active-site residues include histidine 1260 and glutamate 1262.

In the N-terminal section; belongs to the FGAMS family. In terms of assembly, monomer.

It localises to the cytoplasm. The catalysed reaction is N(2)-formyl-N(1)-(5-phospho-beta-D-ribosyl)glycinamide + L-glutamine + ATP + H2O = 2-formamido-N(1)-(5-O-phospho-beta-D-ribosyl)acetamidine + L-glutamate + ADP + phosphate + H(+). Its pathway is purine metabolism; IMP biosynthesis via de novo pathway; 5-amino-1-(5-phospho-D-ribosyl)imidazole from N(2)-formyl-N(1)-(5-phospho-D-ribosyl)glycinamide: step 1/2. Functionally, phosphoribosylformylglycinamidine synthase involved in the purines biosynthetic pathway. Catalyzes the ATP-dependent conversion of formylglycinamide ribonucleotide (FGAR) and glutamine to yield formylglycinamidine ribonucleotide (FGAM) and glutamate. The protein is Phosphoribosylformylglycinamidine synthase of Shigella boydii serotype 4 (strain Sb227).